The primary structure comprises 226 residues: EEF1A lysine methyltransferase 3 (226 aa).

S-adenosyl-L-methionine is bound by residues Trp57, Gly83–Gly85, Asp104, Trp133, and Ala150.

This sequence belongs to the methyltransferase superfamily. METTL21 family. As to quaternary structure, interacts with members of the heat shock protein 70 and 90 families and of the TCP-1 chaperonin family, as well as with HSPD1, STIP1 and tubulin; at least some of these proteins may be methylation substrates.

It localises to the cytoplasm. The protein resides in the cytoskeleton. The protein localises to the microtubule organizing center. Its subcellular location is the centrosome. The enzyme catalyses L-lysyl-[protein] + 3 S-adenosyl-L-methionine = N(6),N(6),N(6)-trimethyl-L-lysyl-[protein] + 3 S-adenosyl-L-homocysteine + 3 H(+). It catalyses the reaction L-lysyl-[protein] + S-adenosyl-L-methionine = N(6)-methyl-L-lysyl-[protein] + S-adenosyl-L-homocysteine + H(+). The catalysed reaction is N(6)-methyl-L-lysyl-[protein] + S-adenosyl-L-methionine = N(6),N(6)-dimethyl-L-lysyl-[protein] + S-adenosyl-L-homocysteine + H(+). It carries out the reaction N(6),N(6)-dimethyl-L-lysyl-[protein] + S-adenosyl-L-methionine = N(6),N(6),N(6)-trimethyl-L-lysyl-[protein] + S-adenosyl-L-homocysteine + H(+). Its function is as follows. Protein-lysine methyltransferase that selectively mono-, di- and trimethylates 'Lys-165' of the translation elongation factors EEF1A1 and EEF1A2 in an aminoacyl-tRNA and GTP-dependent manner. EEF1A1 methylation by EEF1AKMT3 is dynamic as well as inducible by stress conditions, such as ER-stress, and plays a regulatory role on mRNA translation. This chain is EEF1A lysine methyltransferase 3, found in Bos taurus (Bovine).